The sequence spans 730 residues: MVPPAVLLPWVVLPLLGVQGGSGSKQEENLLVLTVATKQTEGFRRFRRSAQFFNYKIQVLGLDEEWKGGDDKKPAGGGQKVRLLKSALKQHADKEDLVILFIESYDVLFASGPTELLKKFKQAKSKVVFSAENYIYPDRKLEAKYPPVRDGKRFLGSGGFIGYAPNLKKLVEEWKGKDDDSDQLFYTKIFLDPEKRENINISLDHRSRIFQNLNGALDEVVLKFENARVRARNLLYDTLPVIIHGNGPTKLQLNYLGNYIPQIWTFETGCTVCDEGLRSLTGIKDEALPMILIGIFIEQPTPFLSQFFLRLRNLHYPKQRIQIFIHNHEEHHSMQVDSFVKEHSKEYLAMKVIGPDDEVENAEARNLGMDLCRKDPDCDYYFSLDAEVVLKNTETLRILIEQNKSVIAPLVSRHEKLWSNFWGALSPDGYYARSEDYVDIVQRRRVGLWNVPYISSVYMVKGKVLRSELDEGDLFHGGKLDADMAFCHNVRNQGVFMYLTNRHQFGHILSLENYQTTHLHNDLWQIFSNPEDWREKYIHENYTAALKGKLVEMPCPDVYWFPIFTDTACDELVEEMEHYGKWSTGDNTDSRIQGGYENVPTIDIHMNQIGFEREWYKFLLDYIAPITEKLYPGYYTKTQFELAFVVRYKPDEQPSLMPHHDASTFTINIALNRVGIDYEGGGCRFLRYNCSIRAPRKGWTLMHPGRLTHYHEGLPTTKGTRYIAVSFIDP.

Positions 1–20 are cleaved as a signal peptide; sequence MVPPAVLLPWVVLPLLGVQG. N-linked (GlcNAc...) asparagine glycans are attached at residues asparagine 200, asparagine 403, and asparagine 541. One can recognise a Fe2OG dioxygenase domain in the interval 639–730; that stretch reads QFELAFVVRY…RYIAVSFIDP (92 aa). Residues histidine 659 and aspartate 661 each contribute to the Fe cation site. Asparagine 689 is a glycosylation site (N-linked (GlcNAc...) asparagine). Histidine 711 contributes to the Fe cation binding site. The active site involves arginine 721.

As to quaternary structure, homodimer. Requires Fe(2+) as cofactor. It depends on L-ascorbate as a cofactor.

It localises to the rough endoplasmic reticulum membrane. It carries out the reaction L-lysyl-[collagen] + 2-oxoglutarate + O2 = (5R)-5-hydroxy-L-lysyl-[collagen] + succinate + CO2. Functionally, forms hydroxylysine residues in -Xaa-Lys-Gly- sequences in collagens. These hydroxylysines serve as sites of attachment for carbohydrate units and are essential for the stability of the intermolecular collagen cross-links. The protein is Procollagen-lysine,2-oxoglutarate 5-dioxygenase 1 (PLOD1) of Gallus gallus (Chicken).